Here is a 456-residue protein sequence, read N- to C-terminus: RNA polymerase II-associated protein 1 homolog (456 aa).

Residues 382–456 (LRSVEGSLNE…PVEQLQNEED (75 aa)) are disordered. Ser-388 bears the Phosphoserine mark. Residues 396–406 (EEKPAESREQL) are compositionally biased toward basic and acidic residues. Composition is skewed to polar residues over residues 408-433 (SAEQ…QANS) and 441-456 (GNTQ…NEED).

Belongs to the PAF1 family.

It localises to the cytoplasm. The protein resides in the nucleus. This chain is RNA polymerase II-associated protein 1 homolog, found in Schizosaccharomyces pombe (strain 972 / ATCC 24843) (Fission yeast).